A 189-amino-acid polypeptide reads, in one-letter code: Ornithine decarboxylase antizyme 2 (189 aa).

Phosphoserine is present on Ser-186.

Belongs to the ODC antizyme family. As to quaternary structure, interacts with ODC1 and thereby sterically blocks ODC homodimerization. Interacts with AZIN2; this interaction disrupts the interaction between the antizyme and ODC1.

It is found in the nucleus. Its function is as follows. Ornithine decarboxylase (ODC) antizyme protein that negatively regulates ODC activity and intracellular polyamine biosynthesis and uptake in response to increased intracellular polyamine levels. Binds to ODC monomers, inhibiting the assembly of the functional ODC homodimers. Does not target the ODC monomers for degradation, which allows a protein synthesis-independent restoration of ODC activity. Involved in the translocation of AZIN2 from ER-Golgi intermediate compartment (ERGIC) to the cytosol. This Homo sapiens (Human) protein is Ornithine decarboxylase antizyme 2 (OAZ2).